Here is a 195-residue protein sequence, read N- to C-terminus: Small ribosomal subunit protein uS4 (195 aa).

One can recognise an S4 RNA-binding domain in the interval 88–150; it reads RRLENVVYRL…SKNVELIKLA (63 aa).

This sequence belongs to the universal ribosomal protein uS4 family. As to quaternary structure, part of the 30S ribosomal subunit. Contacts protein S5. The interaction surface between S4 and S5 is involved in control of translational fidelity.

Its function is as follows. One of the primary rRNA binding proteins, it binds directly to 16S rRNA where it nucleates assembly of the body of the 30S subunit. Functionally, with S5 and S12 plays an important role in translational accuracy. In Fusobacterium nucleatum subsp. nucleatum (strain ATCC 25586 / DSM 15643 / BCRC 10681 / CIP 101130 / JCM 8532 / KCTC 2640 / LMG 13131 / VPI 4355), this protein is Small ribosomal subunit protein uS4.